The following is a 274-amino-acid chain: 2,3,4,5-tetrahydropyridine-2,6-dicarboxylate N-succinyltransferase (274 aa).

Residues Arg-104 and Asp-141 each contribute to the substrate site.

The protein belongs to the transferase hexapeptide repeat family. In terms of assembly, homotrimer.

Its subcellular location is the cytoplasm. The enzyme catalyses (S)-2,3,4,5-tetrahydrodipicolinate + succinyl-CoA + H2O = (S)-2-succinylamino-6-oxoheptanedioate + CoA. Its pathway is amino-acid biosynthesis; L-lysine biosynthesis via DAP pathway; LL-2,6-diaminopimelate from (S)-tetrahydrodipicolinate (succinylase route): step 1/3. Inhibited by p-(chloromercuri)benzenesulfonic acid and cobalt. This Unknown prokaryotic organism protein is 2,3,4,5-tetrahydropyridine-2,6-dicarboxylate N-succinyltransferase (dapD).